Here is a 463-residue protein sequence, read N- to C-terminus: tRNA modification GTPase MnmE (463 aa).

Arg27, Glu92, and Lys131 together coordinate (6S)-5-formyl-5,6,7,8-tetrahydrofolate. The TrmE-type G domain occupies 234–386; it reads GIKLAIVGKP…LEDHLLKIYS (153 aa). Asn244 serves as a coordination point for K(+). Residues 244–249, 263–269, and 288–291 each bind GTP; these read NVGKSS, TNVAGTT, and DTAG. Ser248 contacts Mg(2+). Thr263, Val265, and Thr268 together coordinate K(+). Thr269 provides a ligand contact to Mg(2+). Lys463 provides a ligand contact to (6S)-5-formyl-5,6,7,8-tetrahydrofolate.

It belongs to the TRAFAC class TrmE-Era-EngA-EngB-Septin-like GTPase superfamily. TrmE GTPase family. As to quaternary structure, homodimer. Heterotetramer of two MnmE and two MnmG subunits. Requires K(+) as cofactor.

It localises to the cytoplasm. Exhibits a very high intrinsic GTPase hydrolysis rate. Involved in the addition of a carboxymethylaminomethyl (cmnm) group at the wobble position (U34) of certain tRNAs, forming tRNA-cmnm(5)s(2)U34. The sequence is that of tRNA modification GTPase MnmE from Mycoplasmopsis synoviae (strain 53) (Mycoplasma synoviae).